We begin with the raw amino-acid sequence, 1607 residues long: Putative molluscan insulin-related peptide(s) receptor (1607 aa).

Positions 1–35 (MHPGSISFNMIINKCIPICLFILFIMMMEFTVSKA) are cleaved as a signal peptide. 17 N-linked (GlcNAc...) asparagine glycosylation sites follow: Asn82, Asn188, Asn245, Asn275, Asn332, Asn343, Asn495, Asn520, Asn663, Asn710, Asn778, Asn796, Asn802, Asn868, Asn879, Asn940, and Asn953. 3 Fibronectin type-III domains span residues 517–632 (HDLN…TYPF), 636–726 (EPTD…SKEE), and 756–861 (LPDE…TKDS). The Extracellular portion of the chain corresponds to 698–975 (EKVKIEEEGK…RPPDPESSNT (278 aa)). The region spanning 870-967 (TTVDTEIETN…LERFFIVPRP (98 aa)) is the Fibronectin type-III 4 domain. A helical transmembrane segment spans residues 976-996 (LLIVAIVLAFFGVLTVSLIVA). Over 997-1607 (CVYYKQKIRS…WSTLKMVLVL (611 aa)) the chain is Cytoplasmic. The Protein kinase domain maps to 1037-1308 (IKLIKELGQG…AIIEYLLPKL (272 aa)). ATP is bound by residues 1043–1051 (LGQGSFGMV) and Lys1072. Residue Asp1173 is the Proton acceptor of the active site. Tyr1199 is subject to Phosphotyrosine; by autocatalysis. 2 disordered regions span residues 1328–1352 (GAGEGTLAEPEGSDDSSSINSLSCE) and 1501–1539 (TLNGNQSSHNNNSFELMTPDPLKSGPASESSNGVSSSSW). A compositionally biased stretch (polar residues) spans 1503–1515 (NGNQSSHNNNSFE). Positions 1524 to 1538 (SGPASESSNGVSSSS) are enriched in low complexity.

This sequence belongs to the protein kinase superfamily. Tyr protein kinase family. Insulin receptor subfamily. Probable tetramer of 2 alpha and 2 beta chains linked by disulfide bonds. The alpha chains contribute to the formation of the ligand-binding domain, while the beta chains carry the kinase domain. Mn(2+) serves as cofactor.

It localises to the membrane. The catalysed reaction is L-tyrosyl-[protein] + ATP = O-phospho-L-tyrosyl-[protein] + ADP + H(+). Its function is as follows. This receptor probably binds to the four different molluscan insulin-related peptides and has a tyrosine-protein kinase activity. This Lymnaea stagnalis (Great pond snail) protein is Putative molluscan insulin-related peptide(s) receptor.